Consider the following 379-residue polypeptide: Sensor histidine kinase YhcY (379 aa).

The Histidine kinase domain maps to 185–373; sequence RLAQELHDSV…KLSIRLPLKS (189 aa). Histidine 191 carries the post-translational modification Phosphohistidine; by autocatalysis.

The catalysed reaction is ATP + protein L-histidine = ADP + protein N-phospho-L-histidine.. Member of the two-component regulatory system YhcY/YhcZ. Probably activates YhcZ by phosphorylation. In Bacillus subtilis (strain 168), this protein is Sensor histidine kinase YhcY (yhcY).